The sequence spans 46 residues: Pape peptide (46 aa).

The segment covering 1–10 (KQLLKEALAP) has biased composition (low complexity). The tract at residues 1-46 (KQLLKEALAPEPAPKPAPEPAPEPAPEPAPEAAPEPAAAAPEAAPE) is disordered. The segment covering 11-33 (EPAPKPAPEPAPEPAPEPAPEAA) has biased composition (pro residues). PAPE repeat units follow at residues 16–19 (PAPE), 20–23 (PAPE), 24–27 (PAPE), and 28–31 (PAPE). A compositionally biased stretch (low complexity) spans 34–46 (PEPAAAAPEAAPE).

As to expression, expressed by the venom gland.

Its subcellular location is the secreted. This Tityus stigmurus (Brazilian scorpion) protein is Pape peptide.